The following is a 236-amino-acid chain: GLIPR1-like protein 1 (236 aa).

The signal sequence occupies residues 1 to 27 (MALKKKLNFLWTLVLYLIASRLPKAFG). Positions 46-178 (LNIHNELRRK…FSAGLFVCNY (133 aa)) constitute an SCP domain. Residue N126 is glycosylated (N-linked (GlcNAc...) asparagine).

The protein belongs to the CRISP family. In terms of assembly, part of a oolemmal binding multimeric complex (IZUMO1 complex) composed at least of IZUMO1 and GLIPR1L1; the complex assemblage is influenced by the maturation status of the male germ cell. Interacts with IZUMO1. Post-translationally, N-glycosylated. N-glycosylation decreases during the transit in the caput. As to expression, expressed in testis (at protein level). Little or no expression in other tissues tested.

It localises to the cytoplasmic vesicle. The protein localises to the secretory vesicle. It is found in the acrosome. Its subcellular location is the cell membrane. The protein resides in the membrane raft. It localises to the secreted. Functionally, required for optimal fertilization at the stage of sperm-oocyte fusion, plays a role in optimizing acrosome function, the translocation of IZUMO1 during the acrosome reaction and the fertilization process. Component of epididymosomes, one type of membranous microvesicules which mediate the transfer of lipids and proteins to spermatozoa plasma membrane during epididymal maturation. Also component of the CD9-positive microvesicules found in the cauda region. The sequence is that of GLIPR1-like protein 1 from Mus musculus (Mouse).